A 207-amino-acid polypeptide reads, in one-letter code: Small ribosomal subunit protein uS2 (207 aa).

Belongs to the universal ribosomal protein uS2 family.

This Methanocella arvoryzae (strain DSM 22066 / NBRC 105507 / MRE50) protein is Small ribosomal subunit protein uS2.